A 240-amino-acid polypeptide reads, in one-letter code: MQFSTLVSLAAVIVSTNAAALLTQTVESSTVVTITSCGPEHTNCPASSPATPAPAPSASAPAPPAPEQPEPSAPAPAPSAPAPEQPEQPATPATPAAPATPATPAAPEPSAPAPEQPASPAAPAPAPSAPAPAPEQPEQPAAPTTKEAESTPAPAPSAPAPPAPEQPESAPAPAPSAPAPEQPESSPAPAPSAPASVPEQPASSVSNSTGPSSVPTFEGAAAKQYITGSVAVIAAALLAL.

Residues 1–18 (MQFSTLVSLAAVIVSTNA) form the signal peptide. Positions 41-216 (HTNCPASSPA…NSTGPSSVPT (176 aa)) are disordered. Residues 51 to 86 (TPAPAPSASAPAPPAPEQPEPSAPAPAPSAPAPEQP) show a composition bias toward pro residues. Over residues 87–103 (EQPATPATPAAPATPAT) the composition is skewed to low complexity. Pro residues-rich tracts occupy residues 104-137 (PAAP…PEQP) and 153-192 (APAP…PAPS). Over residues 193 to 216 (APASVPEQPASSVSNSTGPSSVPT) the composition is skewed to low complexity. Residue Asn-207 is glycosylated (N-linked (GlcNAc...) asparagine). Gly-219 is lipidated: GPI-anchor amidated glycine. Residues 220–240 (AAAKQYITGSVAVIAAALLAL) constitute a propeptide, removed in mature form.

Its subcellular location is the cell membrane. The protein is Predicted GPI-anchored protein 58 (PGA58) of Candida albicans (strain SC5314 / ATCC MYA-2876) (Yeast).